The primary structure comprises 573 residues: MTQLSRERYAALYGPTTGDRIRLADTDLLIEITEDRSGGPGLAGDEAVFGGGKVLRESMGQSRVTRADGAPDTVITGAVILDYWGIIKADIGIRDGRITAIGKAGNPDIMTGVHPGLVVGPSTEIIAGNGRIVTAGAIDCHVHLICPQIMAEALGGGITTIVAGGTGPAEGSKATTVTPGAWHLARMLEALDTWPLNIALLGKGNTVSAEAMWEQLRGGAAGFKLHEDWGTTPAAIDACLTVCDAAGVQANIHTDTLNEAGFVEHTLAAIKGRSIHAYHTEGAGGGHAPDIITVAGHPNVLPSSTNPTRPHTVNTLDEHLDMLMVCHHLNPSVPEDLAFAESRIRPSTIAAEDLLHDIGAISMIGSDAQAMGRIGEVVMRTWQTAHVMKRRRGFLPGDTKADNARAKRYVAKYTICPAVAHGLDGEIGSVEVGKLADLVLWEPAFFGVRPHAVVKGGMIAWAAMGDANASIPTPQPVLPRPMFGAAPAAAAATSVHFVAPQAIEDGLADRIAVNRKLVAVGNVRGVGKAQMPLNDATPDIEVDPDTFTVRIDGEVWQEQPATELPMAQRYFLF.

The Urease domain occupies 136–573 (GAIDCHVHLI…LPMAQRYFLF (438 aa)). Positions 141, 143, and 224 each coordinate Ni(2+). Position 224 is an N6-carboxylysine (K224). A substrate-binding site is contributed by H226. Ni(2+) contacts are provided by H253 and H279. H327 (proton donor) is an active-site residue. Position 367 (D367) interacts with Ni(2+).

The protein belongs to the metallo-dependent hydrolases superfamily. Urease alpha subunit family. In terms of assembly, heterotrimer of UreA (gamma), UreB (beta) and UreC (alpha) subunits. Three heterotrimers associate to form the active enzyme. Requires Ni cation as cofactor. In terms of processing, carboxylation allows a single lysine to coordinate two nickel ions.

The protein resides in the cytoplasm. It catalyses the reaction urea + 2 H2O + H(+) = hydrogencarbonate + 2 NH4(+). The protein operates within nitrogen metabolism; urea degradation; CO(2) and NH(3) from urea (urease route): step 1/1. The chain is Urease subunit alpha from Mycolicibacterium vanbaalenii (strain DSM 7251 / JCM 13017 / BCRC 16820 / KCTC 9966 / NRRL B-24157 / PYR-1) (Mycobacterium vanbaalenii).